We begin with the raw amino-acid sequence, 189 residues long: Phomopsin biosynthesis cluster protein C' (189 aa).

This sequence belongs to the oryJ family.

In terms of biological role, part of the gene cluster that mediates the biosynthesis of the phomopsins, a group of hexapeptide mycotoxins which infects lupins and causes lupinosis disease in livestock. The role of phomC' within the phomopsins biosynthesis pathway has still to be determined. The pathway starts with the processing of the precursor phomA by several endopeptidases including kexin proteases as well as the cluster-specific S41 family peptidase phomP1 and the oligopeptidase phomG to produce 10 identical copies of the hexapeptide Tyr-Val-Ile-Pro-Ile-Asp. After being excised from the precursor peptide, the core peptides are cyclized and modified post-translationally by enzymes encoded within the gene cluster. The timing and order of proteolysis of the phomA precursor and PTMs are still unknown. Two tyrosinase-like enzymes, phomQ1 and phomQ2, catalyze the chlorination and hydroxylation of Tyr, respectively. PhomYb, is proposed to be involved in the construction of the macrocyclic structure. The other 4 ustYa family proteins may be involved in PTMs that generate the unique structure of phomopsin A. PhomYa is required for the hydroxylation of C-beta of Tyr. PhomYc, phomYd, and phomYe are responsible for the biosynthesis of 2,3-dehydroisoleucine (dIle), 2,3-dehydroaspartic acid (dAsp), and 3,4-dehydroproline (dPro), respectively. While dIle formation by phomYc is indispensable for the installation of dAsp by phomYd, the order of the other PTMs have not been elucidated yet. Most of the biosynthetic enzymes likely have broad substrate specificity, and thus, there might be a metabolic grid from a precursor to phomopsin A. The enzyme(s) responsible for the biosynthesis of 3,4-dehydrovaline (dVal) have also not been identified yet. Finally, phomM acts as an S-adenosylmethionine-dependent alpha-N-methyltransferase that catalyzes two successive N-methylation reactions, converting N-desmethyl-phomopsin A to phomopsin A and phomopsin A further to an N,N-dimethylated congener called phomopsin E. This is Phomopsin biosynthesis cluster protein C' from Diaporthe leptostromiformis (Lupinosis disease fungus).